The sequence spans 110 residues: Large ribosomal subunit protein uL22 (110 aa).

Belongs to the universal ribosomal protein uL22 family. In terms of assembly, part of the 50S ribosomal subunit.

This protein binds specifically to 23S rRNA; its binding is stimulated by other ribosomal proteins, e.g. L4, L17, and L20. It is important during the early stages of 50S assembly. It makes multiple contacts with different domains of the 23S rRNA in the assembled 50S subunit and ribosome. In terms of biological role, the globular domain of the protein is located near the polypeptide exit tunnel on the outside of the subunit, while an extended beta-hairpin is found that lines the wall of the exit tunnel in the center of the 70S ribosome. The chain is Large ribosomal subunit protein uL22 from Alkaliphilus metalliredigens (strain QYMF).